The sequence spans 575 residues: Proline--tRNA ligase (575 aa).

The protein belongs to the class-II aminoacyl-tRNA synthetase family. ProS type 1 subfamily. As to quaternary structure, homodimer.

The protein resides in the cytoplasm. The enzyme catalyses tRNA(Pro) + L-proline + ATP = L-prolyl-tRNA(Pro) + AMP + diphosphate. Functionally, catalyzes the attachment of proline to tRNA(Pro) in a two-step reaction: proline is first activated by ATP to form Pro-AMP and then transferred to the acceptor end of tRNA(Pro). As ProRS can inadvertently accommodate and process non-cognate amino acids such as alanine and cysteine, to avoid such errors it has two additional distinct editing activities against alanine. One activity is designated as 'pretransfer' editing and involves the tRNA(Pro)-independent hydrolysis of activated Ala-AMP. The other activity is designated 'posttransfer' editing and involves deacylation of mischarged Ala-tRNA(Pro). The misacylated Cys-tRNA(Pro) is not edited by ProRS. This chain is Proline--tRNA ligase, found in Solidesulfovibrio magneticus (strain ATCC 700980 / DSM 13731 / RS-1) (Desulfovibrio magneticus).